A 600-amino-acid polypeptide reads, in one-letter code: Alpha pinene synthase, chloroplastic (600 aa).

The segment at 1–26 is disordered; the sequence is MSSISMHARPLNISAANNHHPSWDRR. Residues 1–31 constitute a chloroplast transit peptide; that stretch reads MSSISMHARPLNISAANNHHPSWDRRVSKPR. Mg(2+) is bound by residues aspartate 354, aspartate 358, aspartate 498, and glutamate 506. The short motif at 354-358 is the DDXXD motif element; sequence DDVYD.

The protein belongs to the terpene synthase family. Tpsa subfamily. The cofactor is Mg(2+). Requires Mn(2+) as cofactor. As to expression, barely detectable in leaves.

The protein resides in the plastid. The protein localises to the chloroplast. It carries out the reaction (2E)-geranyl diphosphate = alpha-pinene + diphosphate. It functions in the pathway secondary metabolite biosynthesis; terpenoid biosynthesis. Its function is as follows. Monoterpene synthase involved in the biosynthesis of volatile compounds widely used in aromatherapy and folk medicine, and present in culinary herbs. Mediates the conversion of (2E)-geranyl diphosphate (GPP) into alpha-pinene and, as minor compounds, into alpha-phellandrene, limonene and alpha-terpinolene. This chain is Alpha pinene synthase, chloroplastic, found in Lavandula stoechas (Butterfly lavender).